We begin with the raw amino-acid sequence, 298 residues long: tRNA dimethylallyltransferase 2 (298 aa).

Residue G19–T26 coordinates ATP. T21–T26 provides a ligand contact to substrate. The interaction with substrate tRNA stretch occupies residues D44–Q47.

This sequence belongs to the IPP transferase family. Monomer. Mg(2+) is required as a cofactor.

The enzyme catalyses adenosine(37) in tRNA + dimethylallyl diphosphate = N(6)-dimethylallyladenosine(37) in tRNA + diphosphate. Catalyzes the transfer of a dimethylallyl group onto the adenine at position 37 in tRNAs that read codons beginning with uridine, leading to the formation of N6-(dimethylallyl)adenosine (i(6)A). In Treponema denticola (strain ATCC 35405 / DSM 14222 / CIP 103919 / JCM 8153 / KCTC 15104), this protein is tRNA dimethylallyltransferase 2.